The following is a 248-amino-acid chain: Aspartate/glutamate leucyltransferase (248 aa).

The protein belongs to the R-transferase family. Bpt subfamily.

The protein resides in the cytoplasm. It catalyses the reaction N-terminal L-glutamyl-[protein] + L-leucyl-tRNA(Leu) = N-terminal L-leucyl-L-glutamyl-[protein] + tRNA(Leu) + H(+). The enzyme catalyses N-terminal L-aspartyl-[protein] + L-leucyl-tRNA(Leu) = N-terminal L-leucyl-L-aspartyl-[protein] + tRNA(Leu) + H(+). Its function is as follows. Functions in the N-end rule pathway of protein degradation where it conjugates Leu from its aminoacyl-tRNA to the N-termini of proteins containing an N-terminal aspartate or glutamate. The sequence is that of Aspartate/glutamate leucyltransferase from Polynucleobacter asymbioticus (strain DSM 18221 / CIP 109841 / QLW-P1DMWA-1) (Polynucleobacter necessarius subsp. asymbioticus).